We begin with the raw amino-acid sequence, 933 residues long: Probable Rho-type GTPase-activating protein 4 (933 aa).

LIM zinc-binding domains follow at residues 22–80 and 81–129; these read CFCI…LCVD and ICNG…CLPC. Disordered regions lie at residues 181 to 200 and 304 to 338; these read PSSVLSGRMQNTSSPTNSLR and ENGTLPQLPKNESVVNPPPLRRSSTMNYKSVSTTT. A compositionally biased stretch (polar residues) spans 325–338; that stretch reads RSSTMNYKSVSTTT. Residue serine 353 is modified to Phosphoserine. 3 disordered regions span residues 415 to 435, 605 to 628, and 641 to 660; these read RLSSEPNGLKKRLTNSSNYEA, SSSFGIFNNDKKSNRTISTPSPRE, and GFRPKDNKDKESGGYNKRNS. Residues 619-628 show a composition bias toward polar residues; that stretch reads RTISTPSPRE. Serine 625 carries the post-translational modification Phosphoserine. A compositionally biased stretch (basic and acidic residues) spans 643-652; sequence RPKDNKDKES. Phosphoserine occurs at positions 738 and 740. The Rho-GAP domain occupies 753–932; that stretch reads NRLTLLRVPT…FLIDHVHEVF (180 aa).

GTPase-activating protein for Rho-type proteins. This is Probable Rho-type GTPase-activating protein 4 (rga4) from Schizosaccharomyces pombe (strain 972 / ATCC 24843) (Fission yeast).